Consider the following 764-residue polypeptide: Polymeric immunoglobulin receptor (764 aa).

Positions 1–18 (MLLFVLTCLLAVFPAIST) are cleaved as a signal peptide. In terms of domain architecture, Ig-like V-type 1; required for binding to polymeric IgA and IgM spans 19–120 (KSPIFGPEEV…GLGINSRGLS (102 aa)). Over 19-638 (KSPIFGPEEV…SSEEQGGSSR (620 aa)) the chain is Extracellular. 2 disulfides stabilise this stretch: C40/C110 and C56/C64. N83, N90, N135, and N186 each carry an N-linked (GlcNAc...) asparagine glycan. 4 consecutive Ig-like V-type domains span residues 145–237 (GRTV…DLQV), 250–352 (RGSV…ESTI), 364–458 (GGSV…IKII), and 462–561 (PNLK…VYVA). 5 cysteine pairs are disulfide-bonded: C152–C220, C257–C325, C271–C279, C371–C441, and C385–C395. N-linked (GlcNAc...) asparagine glycosylation occurs at N421. Residue N469 is glycosylated (N-linked (GlcNAc...) (complex) asparagine). Cystine bridges form between C482/C544, C486/C520, and C496/C503. An N-linked (GlcNAc...) asparagine glycan is attached at N499. The segment covering 609–619 (KAVADTRDQAD) has biased composition (basic and acidic residues). The interval 609 to 637 (KAVADTRDQADGSRASVDSGSSEEQGGSS) is disordered. Residues 627-637 (SGSSEEQGGSS) show a composition bias toward low complexity. The helical transmembrane segment at 639–661 (ALVSTLVPLGLVLAVGAVAVGVA) threads the bilayer. The Cytoplasmic portion of the chain corresponds to 662–764 (RARHRKNVDR…AEAQDGPQEA (103 aa)). 4 positions are modified to phosphoserine: S673, S682, S689, and S735. A disordered region spans residues 717 to 738 (ATTESTTETKEPKKAKRSSKEE). A compositionally biased stretch (basic and acidic residues) spans 723–738 (TETKEPKKAKRSSKEE).

As to quaternary structure, interacts (mainly via CDR1-like domain) with dimeric IgA. Interacts (mainly via CDR2-like domain) with pentameric IgM. In terms of assembly, either free or part of the secretory IgA (sIgA) complex that consists of two, four or five IgA monomers, and two additional non-Ig polypeptides, namely the JCHAIN and the secretory component (the proteolytic product of PIGR). Free secretory component interacts with bacterial antigens toxA of C.difficile and eaeA of E.coli. N-glycosylated. N-glycosylation is required for anchoring IgA molecules to mucus, but is not necessary for Ig binding.

Its subcellular location is the cell membrane. The protein resides in the secreted. Mediates selective transcytosis of polymeric IgA and IgM across mucosal epithelial cells. Binds polymeric IgA and IgM at the basolateral surface of epithelial cells. The complex is then transported across the cell to be secreted at the apical surface. During this process, a cleavage occurs that separates the extracellular (known as the secretory component) from the transmembrane segment. Functionally, through its N-linked glycans ensures anchoring of secretory IgA (sIgA) molecules to mucus lining the epithelial surface to neutralize extracellular pathogens. On its own (free form) may act as a non-specific microbial scavenger to prevent pathogen interaction with epithelial cells. This is Polymeric immunoglobulin receptor (PIGR) from Homo sapiens (Human).